A 286-amino-acid chain; its full sequence is MYLQDVIMKLNEFWASRGCLLEQPYDLEVGAGTFHPATFFGSLRKGPWKVAYVQPSRRPTDGRYGENPNRLQRYFQYQVIIKPSPENSQELYLESLEYLGVNLREHDIRFVEDNWESPTLGAWGVGWEVWLDGMEITQFTYFQQIGGISLREIPLEITYGLERIAMYLQGVDNVFEVKWNEHVKYGDVFLENEREFSFFNFEEANVELLFRHFDEFESEFYRLIEKKLYLPAYDYVLKCSHTFNLLDARGAISVSQRQTYVKRIQAMARKVARVFLEVQEHENSPA.

This sequence belongs to the class-II aminoacyl-tRNA synthetase family. In terms of assembly, tetramer of two alpha and two beta subunits.

It is found in the cytoplasm. It carries out the reaction tRNA(Gly) + glycine + ATP = glycyl-tRNA(Gly) + AMP + diphosphate. In Thermotoga neapolitana (strain ATCC 49049 / DSM 4359 / NBRC 107923 / NS-E), this protein is Glycine--tRNA ligase alpha subunit.